Consider the following 270-residue polypeptide: 4-hydroxy-tetrahydrodipicolinate reductase (270 aa).

7 to 12 (GANGKM) lines the NAD(+) pocket. Arginine 34 provides a ligand contact to NADP(+). Residues 97–99 (GTT) and 121–124 (SGNM) contribute to the NAD(+) site. The Proton donor/acceptor role is filled by histidine 155. Residue histidine 156 participates in (S)-2,3,4,5-tetrahydrodipicolinate binding. The active-site Proton donor is lysine 159. A (S)-2,3,4,5-tetrahydrodipicolinate-binding site is contributed by 165-166 (GT).

This sequence belongs to the DapB family.

Its subcellular location is the cytoplasm. It catalyses the reaction (S)-2,3,4,5-tetrahydrodipicolinate + NAD(+) + H2O = (2S,4S)-4-hydroxy-2,3,4,5-tetrahydrodipicolinate + NADH + H(+). The enzyme catalyses (S)-2,3,4,5-tetrahydrodipicolinate + NADP(+) + H2O = (2S,4S)-4-hydroxy-2,3,4,5-tetrahydrodipicolinate + NADPH + H(+). Its pathway is amino-acid biosynthesis; L-lysine biosynthesis via DAP pathway; (S)-tetrahydrodipicolinate from L-aspartate: step 4/4. In terms of biological role, catalyzes the conversion of 4-hydroxy-tetrahydrodipicolinate (HTPA) to tetrahydrodipicolinate. The sequence is that of 4-hydroxy-tetrahydrodipicolinate reductase from Bartonella quintana (strain Toulouse) (Rochalimaea quintana).